Here is a 132-residue protein sequence, read N- to C-terminus: MDVTRLLLATLLVFLCFFAAYSHLPPEEKLRDDRSLRSNSSVNLLDLPSVSIVALNKKSKKISRKEAEKKRSSKKEASKQKVARPRTPLSVPCVSTRGSCKPPAPACCHPCASCQCRFFRSACSCRVLNVNC.

Positions 1–22 (MDVTRLLLATLLVFLCFFAAYS) are cleaved as a signal peptide. The N-linked (GlcNAc...) asparagine glycan is linked to N39. The tract at residues 61-93 (KISRKEAEKKRSSKKEASKQKVARPRTPLSVPC) is disordered. Basic and acidic residues predominate over residues 64–79 (RKEAEKKRSSKKEASK). Intrachain disulfides connect C93-C108, C100-C114, C107-C125, C111-C132, and C116-C123. The Agouti domain occupies 93-132 (CVSTRGSCKPPAPACCHPCASCQCRFFRSACSCRVLNVNC).

The protein resides in the secreted. Its function is as follows. Involved in the regulation of melanogenesis. The binding of ASP to MC1R precludes alpha-MSH initiated signaling and thus blocks production of cAMP, leading to a down-regulation of eumelanogenesis (brown/black pigment) and thus increasing synthesis of pheomelanin (yellow/red pigment). The sequence is that of Agouti-signaling protein (ASIP) from Callithrix geoffroyi (Geoffroy's marmoset).